A 5900-amino-acid chain; its full sequence is Midasin (5900 aa).

Residues 250 to 270 (GSSVKSKKGGEQQQEGEGEDE) are disordered. 6 AAA-ATPase protomer regions span residues 278–583 (TNTV…LRKQ), 673–1012 (EKIS…ALNY), 1101–1346 (PIIP…IAGY), 1411–1721 (IVWT…MDKQ), 1840–2089 (RGMQ…HVLT), and 2167–2451 (LENI…EIYM). Residues 302–309 (GVTGSGKT) and 689–696 (GETGTGKT) each bind ATP. The disordered stretch occupies residues 796–826 (QTTTNNTKENNNNNNNNNNNNNNNNNNKKRT). Positions 797-821 (TTTNNTKENNNNNNNNNNNNNNNNN) are enriched in low complexity. ATP-binding positions include 1135–1142 (GPTSSGKT), 1438–1445 (GETGCSKT), 1852–1859 (GSPGVGKT), and 2184–2191 (GPTSTSKT). Positions 2562–4965 (ESAIKSILCE…EGKGKKDVSD (2404 aa)) are linker. The tract at residues 4932–5598 (GDDGEGGEGG…SVEEKKLTRE (667 aa)) is disordered. Residues 4984-5008 (KDEDEDEEKEEKDEDEGFDMQDDFE) are compositionally biased toward acidic residues. Residues 5009–5055 (GEMHDIKKDENKDEDKKDDPNNEKENDKEMGDLEKPEDNVVDEKLWD) are compositionally biased toward basic and acidic residues. The segment covering 5056 to 5076 (EQDVQDEEEQDEEGKGDETNS) has biased composition (acidic residues). Residues 5079–5113 (MMAKQDGKDDNDDDKKDDDKKDDKKKKKEENGKPD) are compositionally biased toward basic and acidic residues. Acidic residues-rich tracts occupy residues 5114-5130 (ENEEGEEGKDDEEEDGK) and 5139-5156 (GASDEDDFGQEENEDDVI). Positions 5159 to 5173 (EQEKEENHGDPRGDD) are enriched in basic and acidic residues. Residues 5174-5199 (QMEIPEDLELEDPDEGKEDDEQQDGG) are compositionally biased toward acidic residues. Positions 5213–5224 (DVSKEEEKKKEL) are enriched in basic and acidic residues. 2 stretches are compositionally biased toward acidic residues: residues 5225–5255 (DGDEKEESDQDGDEEKEDEEKEDGDEDEDKE) and 5273–5286 (EGDEPEKEQPEEDQ). Basic and acidic residues predominate over residues 5297–5313 (ETPKDSEQPLGVKDKTG). Residues 5339–5349 (GMTQPTPSEND) show a composition bias toward polar residues. Residues 5410–5442 (SEPKEKAPKQDPNAKENENQDYEFIKDDEKLDK) show a composition bias toward basic and acidic residues. Over residues 5448-5460 (QALAAATDTQLQD) the composition is skewed to low complexity. The segment covering 5469-5487 (DQAEQEEDQMDIDEEDDMD) has biased composition (acidic residues). Basic and acidic residues-rich tracts occupy residues 5488–5536 (VDHK…KDQQ) and 5551–5570 (QFTKEQLENLTNLDKEKAVL). A compositionally biased stretch (acidic residues) spans 5571–5590 (DDGDDQEMEQDGDQDDEESV). Residues 5696–5889 (QVLLAIDDTE…NIPSILSDTL (194 aa)) form the VWFA domain.

The protein belongs to the midasin family. Associates with pre-60S ribosomes in the nucleoplasm.

The protein localises to the nucleus. Its subcellular location is the nucleolus. The protein resides in the nucleoplasm. Functionally, nuclear chaperone required for maturation and nuclear export of pre-60S ribosome subunits. Functions at successive maturation steps to remove ribosomal factors at critical transition points, first driving the exit of early pre-60S particles from the nucleolus and then driving late pre-60S particles from the nucleus. In Dictyostelium discoideum (Social amoeba), this protein is Midasin (mdn1).